Consider the following 255-residue polypeptide: Hydroxyacylglutathione hydrolase (255 aa).

Zn(2+) is bound by residues His56, His58, Asp60, His61, His114, Asp133, and His171.

It belongs to the metallo-beta-lactamase superfamily. Glyoxalase II family. As to quaternary structure, monomer. Zn(2+) is required as a cofactor.

It carries out the reaction an S-(2-hydroxyacyl)glutathione + H2O = a 2-hydroxy carboxylate + glutathione + H(+). Its pathway is secondary metabolite metabolism; methylglyoxal degradation; (R)-lactate from methylglyoxal: step 2/2. Its function is as follows. Thiolesterase that catalyzes the hydrolysis of S-D-lactoyl-glutathione to form glutathione and D-lactic acid. The sequence is that of Hydroxyacylglutathione hydrolase from Ruegeria pomeroyi (strain ATCC 700808 / DSM 15171 / DSS-3) (Silicibacter pomeroyi).